A 133-amino-acid polypeptide reads, in one-letter code: Putative pre-16S rRNA nuclease (133 aa).

This sequence belongs to the YqgF nuclease family.

The protein resides in the cytoplasm. In terms of biological role, could be a nuclease involved in processing of the 5'-end of pre-16S rRNA. In Bordetella bronchiseptica (strain ATCC BAA-588 / NCTC 13252 / RB50) (Alcaligenes bronchisepticus), this protein is Putative pre-16S rRNA nuclease.